The sequence spans 428 residues: Peptidase B (428 aa).

K195 and D200 together coordinate Mn(2+). K207 is an active-site residue. Mn(2+)-binding residues include D218, D277, and E279. Residue R281 is part of the active site.

This sequence belongs to the peptidase M17 family. As to quaternary structure, homohexamer. Mn(2+) is required as a cofactor.

It localises to the cytoplasm. It catalyses the reaction Release of an N-terminal amino acid, Xaa, from a peptide or arylamide. Xaa is preferably Glu or Asp but may be other amino acids, including Leu, Met, His, Cys and Gln.. In terms of biological role, probably plays an important role in intracellular peptide degradation. The chain is Peptidase B from Enterobacter sp. (strain 638).